Reading from the N-terminus, the 179-residue chain is Adenine phosphoribosyltransferase (179 aa).

This sequence belongs to the purine/pyrimidine phosphoribosyltransferase family. Homodimer.

Its subcellular location is the cytoplasm. The enzyme catalyses AMP + diphosphate = 5-phospho-alpha-D-ribose 1-diphosphate + adenine. The protein operates within purine metabolism; AMP biosynthesis via salvage pathway; AMP from adenine: step 1/1. In terms of biological role, catalyzes a salvage reaction resulting in the formation of AMP, that is energically less costly than de novo synthesis. This Histophilus somni (strain 129Pt) (Haemophilus somnus) protein is Adenine phosphoribosyltransferase.